The primary structure comprises 113 residues: Large ribosomal subunit protein eL34 (113 aa).

Belongs to the eukaryotic ribosomal protein eL34 family.

In Methanopyrus kandleri (strain AV19 / DSM 6324 / JCM 9639 / NBRC 100938), this protein is Large ribosomal subunit protein eL34.